The following is a 198-amino-acid chain: Ras-like protein 2 (198 aa).

18 to 25 (GDGGVGKS) is a binding site for GTP. Residues 40–48 (YDPTIEDSY) carry the Effector region motif. GTP is bound by residues 65–69 (DTAGQ) and 124–127 (NKCD). Cysteine methyl ester is present on Cys195. Cys195 is lipidated: S-farnesyl cysteine. Positions 196 to 198 (IVM) are cleaved as a propeptide — removed in mature form.

This sequence belongs to the small GTPase superfamily. Ras family.

The protein resides in the cell membrane. It carries out the reaction GTP + H2O = GDP + phosphate + H(+). Its activity is regulated as follows. Alternates between an inactive form bound to GDP and an active form bound to GTP. Activated by a guanine nucleotide-exchange factor (GEF) and inactivated by a GTPase-activating protein (GAP). The protein is Ras-like protein 2 (RAS2) of Mucor circinelloides f. lusitanicus (Mucor racemosus var. lusitanicus).